The primary structure comprises 379 residues: Probable RNA methyltransferase RB6963 (379 aa).

Glutamate 89 serves as the catalytic Proton acceptor. The 237-residue stretch at 96 to 332 folds into the Radical SAM core domain; that stretch reads ATGRTTLCVS…VRYSLGNDIE (237 aa). Cysteine 103 and cysteine 335 are disulfide-bonded. Positions 110, 114, and 117 each coordinate [4Fe-4S] cluster. Residues 160 to 161, serine 192, 215 to 217, and asparagine 291 contribute to the S-adenosyl-L-methionine site; these read GE and SLH. Cysteine 335 acts as the S-methylcysteine intermediate in catalysis.

It belongs to the radical SAM superfamily. RlmN family. [4Fe-4S] cluster serves as cofactor.

Its subcellular location is the cytoplasm. This chain is Probable RNA methyltransferase RB6963, found in Rhodopirellula baltica (strain DSM 10527 / NCIMB 13988 / SH1).